A 143-amino-acid chain; its full sequence is Antitumor antibiotic C-1027 apoprotein (143 aa).

The signal sequence occupies residues 1–33; the sequence is MSLRHMSRRASRFGVVAVASIGLAAAAQSVAFA. 2 cysteine pairs are disulfide-bonded: Cys-69-Cys-78 and Cys-119-Cys-124.

Belongs to the neocarzinostatin family.

Functionally, binds non-covalently to a chromophore which is the cytotoxic and mutagenic component of the antibiotic. The chromophore binds to DNA as a weak intercalator and causes single- and double-strand breaks. The sequence is that of Antitumor antibiotic C-1027 apoprotein (cagA) from Streptomyces globisporus.